The sequence spans 360 residues: DNA replication and repair protein RecF (360 aa).

33 to 40 is a binding site for ATP; the sequence is GENGSGKT.

This sequence belongs to the RecF family.

The protein resides in the cytoplasm. The RecF protein is involved in DNA metabolism; it is required for DNA replication and normal SOS inducibility. RecF binds preferentially to single-stranded, linear DNA. It also seems to bind ATP. This is DNA replication and repair protein RecF from Rickettsia akari (strain Hartford).